The sequence spans 320 residues: ATPase H(+)-transporting accessory protein 2 (320 aa).

The N-terminal stretch at 1–17 (MLRVFVIFSLFIAAINA) is a signal peptide. Topologically, residues 18-277 (SGEFTVLNRP…YGSDYPVIFN (260 aa)) are lumenal. The helical transmembrane segment at 278–298 (IILWFMVVFGLSLLAICYAIA) threads the bilayer. The Cytoplasmic portion of the chain corresponds to 299-320 (AMDPGRDSIIYRMTSTRIKKDN). The Mediates retrograde transport to the ER motif lies at 317 to 320 (KKDN).

In terms of assembly, interacts with fz and fz2. Interacts (via N-terminus) with stan. As an accessory component of the multisubunit proton-transporting vacuolar (V)-ATPase protein pump, might interacts with VhaAC45. Post-translationally, proteolytically cleaved by a furin-like convertase in the trans-Golgi network to generate N- and C-terminal fragments. Cleavage is reduced in the fat body.

It is found in the cell membrane. The protein localises to the endoplasmic reticulum membrane. Its subcellular location is the vesicle. It localises to the apical cell membrane. The protein resides in the golgi apparatus membrane. It is found in the secreted. In terms of biological role, multifunctional protein which functions as a transmembrane receptor in the planar cell polarity (PCP) and is involved in the assembly of the proton-transporting vacuolar (V)-ATPase protein pump. As transmembrane receptor mediates fz/PCP signaling through interaction with fz and stabilizes asymmetric PCP domains through its interaction with stan. Also mediates Wnt/beta-cat signaling through interaction with fz/fz2. Probably by controlling the assembly of the V-ATPase pump and thus the acidification of the endo-lysosomal system, plays a role in many neuronal processes including synapse morphology and synaptic transmission. Stabilizes asymmetric Planar Cell Polarity (PCP) domains through its interaction with stan. In Drosophila melanogaster (Fruit fly), this protein is ATPase H(+)-transporting accessory protein 2.